The sequence spans 263 residues: 2-dehydro-3-deoxyphosphooctonate aldolase (263 aa).

This sequence belongs to the KdsA family.

The protein resides in the cytoplasm. The catalysed reaction is D-arabinose 5-phosphate + phosphoenolpyruvate + H2O = 3-deoxy-alpha-D-manno-2-octulosonate-8-phosphate + phosphate. Its pathway is carbohydrate biosynthesis; 3-deoxy-D-manno-octulosonate biosynthesis; 3-deoxy-D-manno-octulosonate from D-ribulose 5-phosphate: step 2/3. It functions in the pathway bacterial outer membrane biogenesis; lipopolysaccharide biosynthesis. The polypeptide is 2-dehydro-3-deoxyphosphooctonate aldolase (Wolinella succinogenes (strain ATCC 29543 / DSM 1740 / CCUG 13145 / JCM 31913 / LMG 7466 / NCTC 11488 / FDC 602W) (Vibrio succinogenes)).